The primary structure comprises 333 residues: 2-haloacrylate reductase (333 aa).

NADP(+) is bound at residue 153–159 (AAAGGMG).

Belongs to the zinc-containing alcohol dehydrogenase family.

It carries out the reaction (S)-2-chloropropanoate + NADP(+) = 2-chloroacrylate + NADPH + H(+). Involved in the degradation of unsaturated organohalogen compounds. Catalyzes the NADPH-dependent reduction of the carbon-carbon double bond of 2-chloroacrylate to produce (S)-2-chloropropionate, which is probably further metabolized to (R)-lactate by (S)-2-haloacid dehalogenase. Can also use 2-bromoacrylate as substrate. Does not act on acrylate, methacrylate, 1,4-benzoquinone and 1,4-naphthoquinone. The chain is 2-haloacrylate reductase from Burkholderia sp.